Consider the following 234-residue polypeptide: Phosphoribosylaminoimidazole-succinocarboxamide synthase (234 aa).

This sequence belongs to the SAICAR synthetase family.

It carries out the reaction 5-amino-1-(5-phospho-D-ribosyl)imidazole-4-carboxylate + L-aspartate + ATP = (2S)-2-[5-amino-1-(5-phospho-beta-D-ribosyl)imidazole-4-carboxamido]succinate + ADP + phosphate + 2 H(+). It participates in purine metabolism; IMP biosynthesis via de novo pathway; 5-amino-1-(5-phospho-D-ribosyl)imidazole-4-carboxamide from 5-amino-1-(5-phospho-D-ribosyl)imidazole-4-carboxylate: step 1/2. The sequence is that of Phosphoribosylaminoimidazole-succinocarboxamide synthase from Pyrobaculum aerophilum (strain ATCC 51768 / DSM 7523 / JCM 9630 / CIP 104966 / NBRC 100827 / IM2).